Here is a 36-residue protein sequence, read N- to C-terminus: Kappa-theraphotoxin-Pg1b (36 aa).

3 cysteine pairs are disulfide-bonded: C4-C19, C11-C24, and C18-C31.

It belongs to the neurotoxin 10 (Hwtx-1) family. 44 (Jztx-4) subfamily. As to expression, expressed by the venom gland.

It localises to the secreted. Gating modifier of Kv2.1/KCNB1, Kv2.2/KCNB2 and Kv4.3/KCND3 channels. The protein is Kappa-theraphotoxin-Pg1b of Chilobrachys guangxiensis (Chinese earth tiger tarantula).